A 339-amino-acid chain; its full sequence is Phosphoribosylformylglycinamidine cyclo-ligase (339 aa).

It belongs to the AIR synthase family.

Its subcellular location is the cytoplasm. It catalyses the reaction 2-formamido-N(1)-(5-O-phospho-beta-D-ribosyl)acetamidine + ATP = 5-amino-1-(5-phospho-beta-D-ribosyl)imidazole + ADP + phosphate + H(+). It functions in the pathway purine metabolism; IMP biosynthesis via de novo pathway; 5-amino-1-(5-phospho-D-ribosyl)imidazole from N(2)-formyl-N(1)-(5-phospho-D-ribosyl)glycinamide: step 2/2. This is Phosphoribosylformylglycinamidine cyclo-ligase from Oceanobacillus iheyensis (strain DSM 14371 / CIP 107618 / JCM 11309 / KCTC 3954 / HTE831).